Consider the following 347-residue polypeptide: N6-Methyl-AMP deaminase-L (347 aa).

Zn(2+) is bound by residues His-19 and His-21. N(6)-methyl-AMP contacts are provided by residues His-21, Asn-23, His-69, 101–104 (STPR), Asp-142, and Gly-175. His-202 is a Zn(2+) binding site. The N(6)-methyl-AMP site is built by Glu-205, Asp-283, and Asp-284. The active-site Proton donor is Glu-205. Zn(2+) is bound at residue Asp-283.

It belongs to the metallo-dependent hydrolases superfamily. Adenosine and AMP deaminases family. Monomer. It depends on Zn(2+) as a cofactor.

It catalyses the reaction N(6)-methyl-AMP + H2O + H(+) = IMP + methylamine. In terms of biological role, catalyzes the hydrolysis of the free cytosolic methylated adenosine nucleotide N(6)-methyl-AMP (N6-mAMP) to produce inositol monophosphate (IMP) and methylamine. Is required for the catabolism of cytosolic N6-mAMP, which is derived from the degradation of mRNA containing N6-methylated adenine (m6A). This is N6-Methyl-AMP deaminase-L (mapda.L) from Xenopus laevis (African clawed frog).